A 492-amino-acid polypeptide reads, in one-letter code: uncharacterized protein (492 aa).

The protein belongs to the FGGY kinase family.

This is an uncharacterized protein from Escherichia coli (strain K12).